Reading from the N-terminus, the 157-residue chain is Cytochrome b6-f complex subunit 4 (157 aa).

3 consecutive transmembrane segments (helical) span residues 35 to 55 (ILYI…GLGV), 94 to 114 (LVGV…AFIE), and 130 to 150 (LVYL…VLGI).

This sequence belongs to the cytochrome b family. PetD subfamily. In terms of assembly, the 4 large subunits of the cytochrome b6-f complex are cytochrome b6, subunit IV (17 kDa polypeptide, petD), cytochrome f and the Rieske protein, while the 4 small subunits are petG, petL, petM and petN. The complex functions as a dimer.

The protein resides in the plastid. It is found in the chloroplast thylakoid membrane. In terms of biological role, component of the cytochrome b6-f complex, which mediates electron transfer between photosystem II (PSII) and photosystem I (PSI), cyclic electron flow around PSI, and state transitions. This chain is Cytochrome b6-f complex subunit 4, found in Amphidinium carterae (Dinoflagellate).